Consider the following 252-residue polypeptide: Carboxymethylenebutenolidase (252 aa).

Residues 1–28 (MCHNKSSAPPTPAHISIQQNRTPGTDPV) are disordered. Active-site residues include Cys-126, Asp-183, and His-214.

Belongs to the dienelactone hydrolase family.

It carries out the reaction 2-(5-oxo-2,5-dihydrofuran-2-ylidene)acetate + H2O = 4-oxohex-2-enedioate + H(+). It functions in the pathway aromatic compound metabolism; 3-chlorocatechol degradation. Ring cleavage of cyclic ester dienelactone to produce maleylacetate. The sequence is that of Carboxymethylenebutenolidase (clcD) from Rhodococcus opacus (Nocardia opaca).